We begin with the raw amino-acid sequence, 356 residues long: Tyrosine recombinase XerS (356 aa).

The region spanning 16 to 121 (LMPWYVLEYY…ALSSLYKYLT (106 aa)) is the Core-binding (CB) domain. Residues 169–354 (GFLTYIDQEH…VNDEQKNALD (186 aa)) enclose the Tyr recombinase domain. Catalysis depends on residues Arg210, Lys234, His306, Arg309, and His332. Tyr341 functions as the O-(3'-phospho-DNA)-tyrosine intermediate in the catalytic mechanism.

This sequence belongs to the 'phage' integrase family. XerS subfamily.

The protein localises to the cytoplasm. Its activity is regulated as follows. FtsK is required for recombination. Site-specific tyrosine recombinase, which acts by catalyzing the cutting and rejoining of the recombining DNA molecules. Essential to convert dimers of the bacterial chromosome into monomers to permit their segregation at cell division. The polypeptide is Tyrosine recombinase XerS (Streptococcus pneumoniae serotype 19F (strain G54)).